Consider the following 379-residue polypeptide: Anomalous homeobox protein (379 aa).

A DNA-binding region (homeobox) is located at residues 135–196 (PEGLKSRNFP…NYRRRQRALP (62 aa)). Residues 195-283 (LPQHMKPAQQ…SKPLDVSGHP (89 aa)) are disordered. A compositionally biased stretch (basic and acidic residues) spans 237–246 (QWSEEREEKG).

The protein localises to the nucleus. The polypeptide is Anomalous homeobox protein (ANHX) (Homo sapiens (Human)).